The sequence spans 155 residues: D-aminoacyl-tRNA deacylase (155 aa).

A Gly-cisPro motif, important for rejection of L-amino acids motif is present at residues 147 to 148; that stretch reads GP.

This sequence belongs to the DTD family. In terms of assembly, homodimer.

It is found in the cytoplasm. The catalysed reaction is glycyl-tRNA(Ala) + H2O = tRNA(Ala) + glycine + H(+). It carries out the reaction a D-aminoacyl-tRNA + H2O = a tRNA + a D-alpha-amino acid + H(+). Functionally, an aminoacyl-tRNA editing enzyme that deacylates mischarged D-aminoacyl-tRNAs. Also deacylates mischarged glycyl-tRNA(Ala), protecting cells against glycine mischarging by AlaRS. Acts via tRNA-based rather than protein-based catalysis; rejects L-amino acids rather than detecting D-amino acids in the active site. By recycling D-aminoacyl-tRNA to D-amino acids and free tRNA molecules, this enzyme counteracts the toxicity associated with the formation of D-aminoacyl-tRNA entities in vivo and helps enforce protein L-homochirality. This is D-aminoacyl-tRNA deacylase from Corynebacterium urealyticum (strain ATCC 43042 / DSM 7109).